The sequence spans 204 residues: Ribonuclease HII (204 aa).

The region spanning M1 to L197 is the RNase H type-2 domain. A divalent metal cation contacts are provided by D6, E7, and D103.

This sequence belongs to the RNase HII family. Mn(2+) serves as cofactor. Requires Mg(2+) as cofactor.

It localises to the cytoplasm. The catalysed reaction is Endonucleolytic cleavage to 5'-phosphomonoester.. Functionally, endonuclease that specifically degrades the RNA of RNA-DNA hybrids. The sequence is that of Ribonuclease HII from Helicobacter pylori (strain P12).